Here is a 365-residue protein sequence, read N- to C-terminus: Eukaryotic translation initiation factor 3 subunit H (365 aa).

Residues 11–160 enclose the MPN domain; the sequence is VKVEALVVMK…LRAFRLSPKF (150 aa).

The protein belongs to the eIF-3 subunit H family. In terms of assembly, component of the eukaryotic translation initiation factor 3 (eIF-3) complex.

The protein resides in the cytoplasm. In terms of biological role, component of the eukaryotic translation initiation factor 3 (eIF-3) complex, which is involved in protein synthesis of a specialized repertoire of mRNAs and, together with other initiation factors, stimulates binding of mRNA and methionyl-tRNAi to the 40S ribosome. The eIF-3 complex specifically targets and initiates translation of a subset of mRNAs involved in cell proliferation. The sequence is that of Eukaryotic translation initiation factor 3 subunit H from Aspergillus terreus (strain NIH 2624 / FGSC A1156).